The sequence spans 448 residues: tRNA(Ile)-lysidine synthase (448 aa).

30 to 35 (GGGADS) contacts ATP.

The protein belongs to the tRNA(Ile)-lysidine synthase family.

It is found in the cytoplasm. The enzyme catalyses cytidine(34) in tRNA(Ile2) + L-lysine + ATP = lysidine(34) in tRNA(Ile2) + AMP + diphosphate + H(+). Functionally, ligates lysine onto the cytidine present at position 34 of the AUA codon-specific tRNA(Ile) that contains the anticodon CAU, in an ATP-dependent manner. Cytidine is converted to lysidine, thus changing the amino acid specificity of the tRNA from methionine to isoleucine. The sequence is that of tRNA(Ile)-lysidine synthase from Idiomarina loihiensis (strain ATCC BAA-735 / DSM 15497 / L2-TR).